The following is a 63-amino-acid chain: Large ribosomal subunit protein uL29 (63 aa).

Belongs to the universal ribosomal protein uL29 family.

The chain is Large ribosomal subunit protein uL29 from Flavobacterium johnsoniae (strain ATCC 17061 / DSM 2064 / JCM 8514 / BCRC 14874 / CCUG 350202 / NBRC 14942 / NCIMB 11054 / UW101) (Cytophaga johnsonae).